Consider the following 162-residue polypeptide: MNISATARSLLLSEFVSAFFLAMRYFFQPKPTLNYPFEKGPISPRFRGEHALRRYPNGEERCIACKLCEAVCPAQAITIEAGPRRNDGTRRTVRYDIDMVKCIYCGLCQEACPVDAIVEGPNFEFATETREELYYDKAKLLANGDRWEREISKAIALDAPYR.

4Fe-4S ferredoxin-type domains are found at residues 52 to 82 (LRRY…IEAG) and 93 to 122 (VRYD…EGPN). Residues Cys-62, Cys-65, Cys-68, Cys-72, Cys-102, Cys-105, Cys-108, and Cys-112 each contribute to the [4Fe-4S] cluster site.

This sequence belongs to the complex I 23 kDa subunit family. In terms of assembly, NDH-1 is composed of 14 different subunits. Subunits NuoA, H, J, K, L, M, N constitute the membrane sector of the complex. Requires [4Fe-4S] cluster as cofactor.

Its subcellular location is the cell inner membrane. It catalyses the reaction a quinone + NADH + 5 H(+)(in) = a quinol + NAD(+) + 4 H(+)(out). NDH-1 shuttles electrons from NADH, via FMN and iron-sulfur (Fe-S) centers, to quinones in the respiratory chain. The immediate electron acceptor for the enzyme in this species is believed to be ubiquinone. Couples the redox reaction to proton translocation (for every two electrons transferred, four hydrogen ions are translocated across the cytoplasmic membrane), and thus conserves the redox energy in a proton gradient. This Bradyrhizobium sp. (strain BTAi1 / ATCC BAA-1182) protein is NADH-quinone oxidoreductase subunit I.